Reading from the N-terminus, the 187-residue chain is Ribosome-recycling factor (187 aa).

It belongs to the RRF family.

Its subcellular location is the cytoplasm. Responsible for the release of ribosomes from messenger RNA at the termination of protein biosynthesis. May increase the efficiency of translation by recycling ribosomes from one round of translation to another. The protein is Ribosome-recycling factor of Lactiplantibacillus plantarum (strain ATCC BAA-793 / NCIMB 8826 / WCFS1) (Lactobacillus plantarum).